A 127-amino-acid chain; its full sequence is DNA-directed RNA polymerases I, II, and III subunit RPABC2 (127 aa).

Acidic residues predominate over residues 1 to 34; that stretch reads MSDNEDNFDGDDFDDVEEDEGLDDLENAEEEGQE. The interval 1-53 is disordered; the sequence is MSDNEDNFDGDDFDDVEEDEGLDDLENAEEEGQENVEILPSGERPQANQKRIT. Serine 2 is modified (N-acetylserine). Serine 2 bears the Phosphoserine; by CK2 mark.

It belongs to the archaeal Rpo6/eukaryotic RPB6 RNA polymerase subunit family. In terms of assembly, component of the RNA polymerase I (Pol I), RNA polymerase II (Pol II) and RNA polymerase III (Pol III) complexes consisting of at least 13, 12 and 17 subunits, respectively. Pol I complex consists of a ten-subunit catalytic core composed of POLR1A/RPA1, POLR1B/RPA2, POLR1C/RPAC1, POLR1D/RPAC2, POLR1H/RPA12, POLR2E/RPABC1, POLR2F/RPABC2, POLR2H/RPABC3, POLR2K/RPABC4 and POLR2L/RPABC5; a mobile stalk subunit POLR1F/RPA43 protruding from the core and additional subunits homologous to general transcription factors POLR1E/RPA49 and POLR1G/RPA34. Part of Pol I pre-initiation complex (PIC), in which Pol I core assembles with RRN3 and promoter-bound UTBF and SL1/TIF-IB complex. Pol II complex contains a ten-subunit catalytic core composed of POLR2A/RPB1, POLR2B/RPB2, POLR2C/RPB3, POLR2I/RPB9, POLR2J/RPB11, POLR2E/RPABC1, POLR2F/RPABC2, POLR2H/RPABC3, POLR2K/RPABC4 and POLR2L/RPABC5 and a mobile stalk composed of two subunits POLR2D/RPB4 and POLR2G/RPB7. Part of Pol II(G) complex, in which Pol II core associates with an additional subunit POLR2M; unlike conventional Pol II, Pol II(G) functions as a transcriptional repressor. Part of TBP-based Pol II pre-initiation complex (PIC), in which Pol II core assembles with general transcription factors and other specific initiation factors including GTF2E1, GTF2E2, GTF2F1, GTF2F2, TCEA1, ERCC2, ERCC3, GTF2H2, GTF2H3, GTF2H4, GTF2H5, GTF2A1, GTF2A2, GTF2B and TBP; this large multi-subunit PIC complex mediates DNA unwinding and targets Pol II core to the transcription start site where the first phosphodiester bond forms. Pol III complex consists of a ten-subunit catalytic core composed of POLR3A/RPC1, POLR3B/RPC2, POLR1C/RPAC1, POLR1D/RPAC2, POLR3K/RPC10, POLR2E/RPABC1, POLR2F/RPABC2, POLR2H/RPABC3, POLR2K/RPABC4 and POLR2L/RPABC5; a mobile stalk composed of two subunits POLR3H/RPC8 and CRCP/RPC9, protruding from the core and functioning primarily in transcription initiation; and additional subunits homologous to general transcription factors of the RNA polymerase II machinery, POLR3C/RPC3-POLR3F/RPC6-POLR3G/RPC7 heterotrimer required for transcription initiation and POLR3D/RPC4-POLR3E/RPC5 heterodimer involved in both transcription initiation and termination.

It localises to the nucleus. Its subcellular location is the nucleolus. In terms of biological role, DNA-dependent RNA polymerase catalyzes the transcription of DNA into RNA using the four ribonucleoside triphosphates as substrates. Common component of RNA polymerases I, II, and III which synthesize ribosomal RNA precursors, mRNA precursors and many functional non-coding RNAs, and small RNAs, such as 5S rRNA and tRNAs, respectively. Pol II is the central component of the basal RNA polymerase II transcription machinery. Pols are composed of mobile elements that move relative to each other. In Pol II, POLR2F/RPABC2 is part of the clamp element and together with parts of POLR2A/RPB1 and POLR2B/RPB2 forms a pocket to which the POLR2D/RPB4-POLR2G/RPB7 subcomplex binds. In Homo sapiens (Human), this protein is DNA-directed RNA polymerases I, II, and III subunit RPABC2.